The primary structure comprises 608 residues: Protein SHQ1 homolog (608 aa).

Disordered regions lie at residues 487–531 and 543–608; these read DAGS…SFYS and IVYE…ASTT. The segment covering 489 to 498 has biased composition (low complexity); that stretch reads GSQGSSPQQQ. Acidic residues-rich tracts occupy residues 502–524 and 543–579; these read DDLD…DESV and IVYE…EDDS. Positions 588 to 608 are enriched in polar residues; it reads EAEGNSVIEQCSNSETAASTT.

It belongs to the SHQ1 family.

Its function is as follows. Required for the quantitative accumulation of H/ACA ribonucleoproteins (RNPs). This chain is Protein SHQ1 homolog, found in Drosophila melanogaster (Fruit fly).